The primary structure comprises 373 residues: Glutamate 5-kinase (373 aa).

Residue Lys15 coordinates ATP. 3 residues coordinate substrate: Ser55, Asp142, and Asn154. ATP is bound by residues 174 to 175 (TD) and 216 to 222 (TGGMATK). The PUA domain occupies 281–359 (AGRIIVDDGA…SRIEAILGYR (79 aa)).

The protein belongs to the glutamate 5-kinase family.

It localises to the cytoplasm. The enzyme catalyses L-glutamate + ATP = L-glutamyl 5-phosphate + ADP. The protein operates within amino-acid biosynthesis; L-proline biosynthesis; L-glutamate 5-semialdehyde from L-glutamate: step 1/2. Catalyzes the transfer of a phosphate group to glutamate to form L-glutamate 5-phosphate. The sequence is that of Glutamate 5-kinase from Pelobacter propionicus (strain DSM 2379 / NBRC 103807 / OttBd1).